The following is a 106-amino-acid chain: Iron-sulfur cluster assembly protein CyaY (106 aa).

Belongs to the frataxin family.

Its function is as follows. Involved in iron-sulfur (Fe-S) cluster assembly. May act as a regulator of Fe-S biogenesis. This Cronobacter sakazakii (strain ATCC BAA-894) (Enterobacter sakazakii) protein is Iron-sulfur cluster assembly protein CyaY.